We begin with the raw amino-acid sequence, 692 residues long: Glycine--tRNA ligase beta subunit (692 aa).

Belongs to the class-II aminoacyl-tRNA synthetase family. In terms of assembly, tetramer of two alpha and two beta subunits.

It is found in the cytoplasm. It carries out the reaction tRNA(Gly) + glycine + ATP = glycyl-tRNA(Gly) + AMP + diphosphate. This Alteromonas mediterranea (strain DSM 17117 / CIP 110805 / LMG 28347 / Deep ecotype) protein is Glycine--tRNA ligase beta subunit.